The following is a 238-amino-acid chain: tRNA (guanine-N(7)-)-methyltransferase (238 aa).

Positions 68, 93, 120, and 143 each coordinate S-adenosyl-L-methionine. Residue aspartate 143 is part of the active site. Substrate contacts are provided by residues lysine 147, aspartate 179, and 216–219 (TKFE).

The protein belongs to the class I-like SAM-binding methyltransferase superfamily. TrmB family.

It catalyses the reaction guanosine(46) in tRNA + S-adenosyl-L-methionine = N(7)-methylguanosine(46) in tRNA + S-adenosyl-L-homocysteine. It participates in tRNA modification; N(7)-methylguanine-tRNA biosynthesis. In terms of biological role, catalyzes the formation of N(7)-methylguanine at position 46 (m7G46) in tRNA. In Shewanella sp. (strain MR-4), this protein is tRNA (guanine-N(7)-)-methyltransferase.